The primary structure comprises 82 residues: Turripeptide Gdm9.1 (82 aa).

An N-terminal signal peptide occupies residues 1–23; sequence MMAKLMITVMMVLLLSLQQGADG. Positions 24 to 46 are excised as a propeptide; it reads RSERWRKNQMAASRIMRNLITAR. Pro-49 and Pro-50 each carry 4-hydroxyproline. Intrachain disulfides connect Cys-53/Cys-68, Cys-58/Cys-72, and Cys-64/Cys-79. 2 positions are modified to 4-carboxyglutamate: Glu-60 and Glu-63.

This sequence belongs to the Pg turripeptide superfamily. As to expression, expressed by the venom duct.

It is found in the secreted. In Gemmula diomedea (Gem-turris), this protein is Turripeptide Gdm9.1.